A 302-amino-acid chain; its full sequence is Oxygen-dependent coproporphyrinogen-III oxidase (302 aa).

Serine 94 contacts substrate. Residues histidine 98 and histidine 108 each coordinate a divalent metal cation. The Proton donor role is filled by histidine 108. Residue 110 to 112 (NVR) participates in substrate binding. A divalent metal cation contacts are provided by histidine 147 and histidine 177. Residues 242 to 277 (YVEFNLVYDRGTLFGLQTGGRTESILMSMPPLVRWQ) are important for dimerization. Position 260–262 (260–262 (GGR)) interacts with substrate.

This sequence belongs to the aerobic coproporphyrinogen-III oxidase family. As to quaternary structure, homodimer. A divalent metal cation serves as cofactor.

It localises to the cytoplasm. It carries out the reaction coproporphyrinogen III + O2 + 2 H(+) = protoporphyrinogen IX + 2 CO2 + 2 H2O. The protein operates within porphyrin-containing compound metabolism; protoporphyrin-IX biosynthesis; protoporphyrinogen-IX from coproporphyrinogen-III (O2 route): step 1/1. Its function is as follows. Involved in the heme biosynthesis. Catalyzes the aerobic oxidative decarboxylation of propionate groups of rings A and B of coproporphyrinogen-III to yield the vinyl groups in protoporphyrinogen-IX. The chain is Oxygen-dependent coproporphyrinogen-III oxidase from Shewanella sp. (strain MR-4).